Reading from the N-terminus, the 60-residue chain is Cecropin-B type 1 (60 aa).

A signal peptide spans 1-24; it reads MNFNKLFALVLLIGLVLLTGQTEA. Ile58 is subject to Isoleucine amide.

The protein belongs to the cecropin family.

Its subcellular location is the secreted. Functionally, cecropins have lytic and antibacterial activity against several Gram-positive and Gram-negative bacteria. The polypeptide is Cecropin-B type 1 (CECB1) (Aedes albopictus (Asian tiger mosquito)).